The chain runs to 255 residues: Thiazole synthase (255 aa).

Lys95 (schiff-base intermediate with DXP) is an active-site residue. 1-deoxy-D-xylulose 5-phosphate contacts are provided by residues Gly156, 182–183, and 204–205; these read AG and NT.

It belongs to the ThiG family. In terms of assembly, homotetramer. Forms heterodimers with either ThiH or ThiS.

The protein localises to the cytoplasm. It carries out the reaction [ThiS sulfur-carrier protein]-C-terminal-Gly-aminoethanethioate + 2-iminoacetate + 1-deoxy-D-xylulose 5-phosphate = [ThiS sulfur-carrier protein]-C-terminal Gly-Gly + 2-[(2R,5Z)-2-carboxy-4-methylthiazol-5(2H)-ylidene]ethyl phosphate + 2 H2O + H(+). Its pathway is cofactor biosynthesis; thiamine diphosphate biosynthesis. Functionally, catalyzes the rearrangement of 1-deoxy-D-xylulose 5-phosphate (DXP) to produce the thiazole phosphate moiety of thiamine. Sulfur is provided by the thiocarboxylate moiety of the carrier protein ThiS. In vitro, sulfur can be provided by H(2)S. The sequence is that of Thiazole synthase from Vibrio campbellii (strain ATCC BAA-1116).